We begin with the raw amino-acid sequence, 318 residues long: Receptor homology region, transmembrane domain- and RING domain-containing protein 6 (318 aa).

Positions 1 to 20 are cleaved as a signal peptide; it reads MNGSWITILSLLVISQLASS. Over 22–162 the chain is Lumenal; the sequence is VTLIGKNTFL…LIPGFGISSW (141 aa). An intrachain disulfide couples Cys62 to Cys87. The PA domain maps to 70 to 143; sequence EKGSKFRPSY…RTSGEVLKEY (74 aa). N-linked (GlcNAc...) asparagine glycosylation is present at Asn121. A helical transmembrane segment spans residues 163–183; sequence SIMAITFVSLLVISAVLASYF. Over 184–318 the chain is Cytoplasmic; sequence SVRRHRIRQH…DLPIVVRVYL (135 aa). The RING-type; atypical zinc-finger motif lies at 233 to 275; the sequence is CAICIDDYRVGEILRILPCKHKYHAVCIDSWLGRCRSFCPVCK.

Its subcellular location is the prevacuolar compartment membrane. It is found in the protein storage vacuole membrane. Involved in the trafficking of vacuolar proteins. May function as a sorting receptor for protein trafficking to the protein storage vacuole (PSV). This is Receptor homology region, transmembrane domain- and RING domain-containing protein 6 (RMR6) from Arabidopsis thaliana (Mouse-ear cress).